The sequence spans 99 residues: Nucleoid-associated protein EbfC (99 aa).

Belongs to the YbaB/EbfC family. Homodimer.

It is found in the cytoplasm. Its subcellular location is the nucleoid. Binds to DNA and alters its conformation. May be involved in regulation of gene expression, nucleoid organization and DNA protection. This is Nucleoid-associated protein EbfC from Borrelia duttonii (strain Ly).